The sequence spans 611 residues: Threonine--tRNA ligase (611 aa).

Residues 211–509 are catalytic; sequence DHRKLGTELE…LTEHYAGEFP (299 aa). Residues Cys310, His361, and His486 each coordinate Zn(2+).

Belongs to the class-II aminoacyl-tRNA synthetase family. Homodimer. It depends on Zn(2+) as a cofactor.

The protein localises to the cytoplasm. The enzyme catalyses tRNA(Thr) + L-threonine + ATP = L-threonyl-tRNA(Thr) + AMP + diphosphate + H(+). Its function is as follows. Catalyzes the attachment of threonine to tRNA(Thr) in a two-step reaction: L-threonine is first activated by ATP to form Thr-AMP and then transferred to the acceptor end of tRNA(Thr). Also edits incorrectly charged L-seryl-tRNA(Thr). This is Threonine--tRNA ligase from Nautilia profundicola (strain ATCC BAA-1463 / DSM 18972 / AmH).